Reading from the N-terminus, the 338-residue chain is Delta(9)-fatty-acid desaturase fat-7 (338 aa).

The next 4 helical transmembrane spans lie at 51–71, 76–96, 194–214, and 218–238; these read VALF…LVFH, TAVF…AGAH, YFPL…VYFW, and AFIA…HATW.

Belongs to the fatty acid desaturase type 1 family. Expressed in the intestine in adult worms and in all four larval stages.

It is found in the membrane. The catalysed reaction is octadecanoyl-CoA + 2 Fe(II)-[cytochrome b5] + O2 + 2 H(+) = (9Z)-octadecenoyl-CoA + 2 Fe(III)-[cytochrome b5] + 2 H2O. It carries out the reaction hexadecanoyl-CoA + 2 Fe(II)-[cytochrome b5] + O2 + 2 H(+) = (9Z)-hexadecenoyl-CoA + 2 Fe(III)-[cytochrome b5] + 2 H2O. The enzyme catalyses heptadecanoyl-CoA + 2 Fe(II)-[cytochrome b5] + O2 + 2 H(+) = (9Z)-heptadecenoyl-CoA + 2 Fe(III)-[cytochrome b5] + 2 H2O. It catalyses the reaction (11E)-octadecenoyl-CoA + 2 Fe(II)-[cytochrome b5] + O2 + 2 H(+) = (9Z,11E)-octadecadienoyl-CoA + 2 Fe(III)-[cytochrome b5] + 2 H2O. The protein operates within lipid metabolism; monounsaturated fatty acid biosynthesis. It functions in the pathway lipid metabolism; fatty acid metabolism. Its function is as follows. Delta(9)-fatty acid desaturase that acts preferentially on stearoyl-CoA (octadecanoyl-CoA) producing the monounsaturated oleoyl-CoA ((9Z)-octadecenoyl-CoA), one of the most abundant monounsaturated fatty acid in Caenorhabditis elegans phospholipids and triacylglycerols. Also acts on palmitoyl-CoA (hexadecanoyl-CoA), heptadecanoyl-CoA and (11E)-octadecenoyl-CoA (trans-vaccenoyl-CoA), the monounsaturated fatty acids (MUFAs) produced are further used by several other desaturases and elongases as substrates to synthesize polyunsaturated fatty acids (PUFAs) endogenously (PUFAs are essential for membrane structure and many cellular and physiological processes). Unlike plants, Caenorhabditis elegans desaturases seem to use fatty acyl-CoAs as substrates. Partially inhibits expression of genes involved in beta-oxidation, such as ech-1 and acs-2, perhaps signaling via the actions of one of its fatty acid products. May form part of a negative feedback loop with the transcription factor nhr-49 to limit beta-oxidation, in which nhr-49 stimulates expression of fat-7 and acs-2, and in turn fat-7 indirectly inhibits acs-2 and other genes also involved in beta-oxidation. This Caenorhabditis elegans protein is Delta(9)-fatty-acid desaturase fat-7 (fat-7).